We begin with the raw amino-acid sequence, 363 residues long: Zinc finger CCCH domain-containing protein 53 (363 aa).

The C3H1-type zinc-finger motif lies at 154 to 181 (KNRPKICSFYTIGQCKRGAECSFRHEMP). Residues 225–310 (KTLYVGGLNS…PPNEYSHYPS (86 aa)) form the RRM domain. The disordered stretch occupies residues 281–348 (LISQQQNQHS…SYSYPMPPHQ (68 aa)). Residues 283–297 (SQQQNQHSQMQQYYM) show a composition bias toward low complexity. Over residues 320–336 (FSTQESDGSSTSENNRA) the composition is skewed to polar residues.

This chain is Zinc finger CCCH domain-containing protein 53, found in Arabidopsis thaliana (Mouse-ear cress).